The following is a 552-amino-acid chain: Urocanate hydratase (552 aa).

NAD(+) is bound by residues 49 to 50 (GG), glutamine 127, 173 to 175 (GMG), aspartate 193, 239 to 240 (NA), 260 to 264 (QTSAH), 270 to 271 (YI), and tyrosine 319. Cysteine 407 is an active-site residue. Glycine 489 provides a ligand contact to NAD(+).

The protein belongs to the urocanase family. NAD(+) is required as a cofactor.

It localises to the cytoplasm. It carries out the reaction 4-imidazolone-5-propanoate = trans-urocanate + H2O. It participates in amino-acid degradation; L-histidine degradation into L-glutamate; N-formimidoyl-L-glutamate from L-histidine: step 2/3. Functionally, catalyzes the conversion of urocanate to 4-imidazolone-5-propionate. This Bacillus cereus (strain AH187) protein is Urocanate hydratase.